Here is a 147-residue protein sequence, read N- to C-terminus: MELHSLKAAEGSRKVRNRVGRGTSSGNGKTSGRGQKGQKSRSGGGVRPGFEGGQTELFRRMPKRGFLNVNRKEYAIVNLETLNRLEDGATVSAETLVAAKIVKDVKSGVKVLANGELTAKNLTVKVAKVSAAAKAAIEAAGGSVEEA.

Over residues 1–13 (MELHSLKAAEGSR) the composition is skewed to basic and acidic residues. The disordered stretch occupies residues 1-57 (MELHSLKAAEGSRKVRNRVGRGTSSGNGKTSGRGQKGQKSRSGGGVRPGFEGGQTEL). 2 stretches are compositionally biased toward gly residues: residues 23–35 (TSSGNGKTSGRGQ) and 42–52 (SGGGVRPGFEG).

The protein belongs to the universal ribosomal protein uL15 family. As to quaternary structure, part of the 50S ribosomal subunit.

Functionally, binds to the 23S rRNA. The sequence is that of Large ribosomal subunit protein uL15 from Lactococcus lactis subsp. cremoris (strain MG1363).